The following is a 497-amino-acid chain: IWS1-like protein (497 aa).

Residues 1–191 are disordered; the sequence is MSDHEGASPA…SDRRGGRNFE (191 aa). Composition is skewed to low complexity over residues 7-23 and 47-57; these read ASPA…PVSP and PLAPRSPASPR. Basic and acidic residues-rich tracts occupy residues 123 to 134, 144 to 160, and 181 to 191; these read EGDKQQKRKDLF, DRPK…VKGD, and PSDRRGGRNFE. Residues 281 to 361 enclose the TFIIS N-terminal domain; that stretch reads SALSEWLAPL…GEWARPIYHL (81 aa). The interval 369–433 is disordered; the sequence is SRQEREERDY…GDKGYINRAR (65 aa). 2 stretches are compositionally biased toward basic and acidic residues: residues 370 to 382 and 401 to 411; these read RQER…SRMP and APKRPRIRDAE.

Belongs to the IWS1 family.

It localises to the nucleus. This chain is IWS1-like protein, found in Caenorhabditis briggsae.